The sequence spans 252 residues: 3-dehydroquinate dehydratase (252 aa).

Residues Ser-21, 46-48 (EWR), and Arg-82 contribute to the 3-dehydroquinate site. The active-site Proton donor/acceptor is the His-143. Catalysis depends on Lys-170, which acts as the Schiff-base intermediate with substrate. 3-dehydroquinate is bound by residues Arg-213, Ser-232, and Gln-236.

The protein belongs to the type-I 3-dehydroquinase family. As to quaternary structure, homodimer.

The enzyme catalyses 3-dehydroquinate = 3-dehydroshikimate + H2O. It participates in metabolic intermediate biosynthesis; chorismate biosynthesis; chorismate from D-erythrose 4-phosphate and phosphoenolpyruvate: step 3/7. Involved in the third step of the chorismate pathway, which leads to the biosynthesis of aromatic amino acids. Catalyzes the cis-dehydration of 3-dehydroquinate (DHQ) and introduces the first double bond of the aromatic ring to yield 3-dehydroshikimate. The protein is 3-dehydroquinate dehydratase of Escherichia coli (strain 55989 / EAEC).